The following is a 411-amino-acid chain: LIM domain-binding protein 1 (411 aa).

Disordered stretches follow at residues 284-330 (PPAE…TFAL) and 367-411 (DAAN…QASQ). Residues 302–318 (SGGSTMSSGGGNTNNSN) are compositionally biased toward low complexity. The LIM interaction domain (LID) domain maps to 336–375 (DVMVVGEPTLMGGEFGDEDERLITRLENTQFDAANGIDDE).

This sequence belongs to the LDB family. Forms homodimers and heterodimers. In terms of tissue distribution, first expressed at stages 15-16 in presumptive limb mesoderm. As limb outgrowth proceeds, expressed in the entire limb bud, concentrating in the distal mesoderm throughout limb development. Both hindlimbs and forelimbs exhibit similar expression patterns.

The protein localises to the nucleus. In terms of biological role, binds to the LIM domain of a wide variety of LIM domain-containing transcription factors. The polypeptide is LIM domain-binding protein 1 (Gallus gallus (Chicken)).